The sequence spans 283 residues: DegV domain-containing protein lmo2514 (283 aa).

The 278-residue stretch at 5–282 folds into the DegV domain; sequence IAVVTDSTTY…EGALGLTWSI (278 aa). Ser63 and Ser96 together coordinate hexadecanoate.

Functionally, may bind long-chain fatty acids, such as palmitate, and may play a role in lipid transport or fatty acid metabolism. The chain is DegV domain-containing protein lmo2514 from Listeria monocytogenes serovar 1/2a (strain ATCC BAA-679 / EGD-e).